The chain runs to 560 residues: NAD-dependent malic enzyme (560 aa).

The active-site Proton donor is the Tyr-100. Arg-153 contributes to the NAD(+) binding site. The active-site Proton acceptor is Lys-171. Positions 242, 243, and 266 each coordinate a divalent metal cation. Residues Asp-266 and Asn-413 each coordinate NAD(+).

The protein belongs to the malic enzymes family. As to quaternary structure, homotetramer. The cofactor is Mg(2+). Mn(2+) serves as cofactor.

The enzyme catalyses (S)-malate + NAD(+) = pyruvate + CO2 + NADH. The catalysed reaction is oxaloacetate + H(+) = pyruvate + CO2. This chain is NAD-dependent malic enzyme, found in Psychrobacter cryohalolentis (strain ATCC BAA-1226 / DSM 17306 / VKM B-2378 / K5).